The following is a 480-amino-acid chain: Glycogen synthase 1 (480 aa).

ADP-alpha-D-glucose is bound at residue K15.

It belongs to the glycosyltransferase 1 family. Bacterial/plant glycogen synthase subfamily.

The catalysed reaction is [(1-&gt;4)-alpha-D-glucosyl](n) + ADP-alpha-D-glucose = [(1-&gt;4)-alpha-D-glucosyl](n+1) + ADP + H(+). It participates in glycan biosynthesis; glycogen biosynthesis. In terms of biological role, synthesizes alpha-1,4-glucan chains using ADP-glucose. This Rhizobium meliloti (strain 1021) (Ensifer meliloti) protein is Glycogen synthase 1 (glgA1).